We begin with the raw amino-acid sequence, 428 residues long: Type II methyltransferase M.TthHB8I (428 aa).

The interval 407–428 (RKGNTERRKHGPYTSPESAGSF) is disordered.

Belongs to the N(4)/N(6)-methyltransferase family.

The enzyme catalyses a 2'-deoxyadenosine in DNA + S-adenosyl-L-methionine = an N(6)-methyl-2'-deoxyadenosine in DNA + S-adenosyl-L-homocysteine + H(+). Functionally, a gamma subtype methylase, recognizes the double-stranded sequence 5'-TCGA-3', methylates A-4 on both strands and protects the DNA from cleavage by the TthHB8I endonuclease. The sequence is that of Type II methyltransferase M.TthHB8I from Thermus thermophilus (strain ATCC 27634 / DSM 579 / HB8).